The sequence spans 264 residues: Formamidopyrimidine-DNA glycosylase (264 aa).

P2 serves as the catalytic Schiff-base intermediate with DNA. The Proton donor role is filled by E3. The Proton donor; for beta-elimination activity role is filled by K58. Residues H89, R107, and R144 each contribute to the DNA site. An FPG-type zinc finger spans residues 229-263 (RVYQRTGEPCLNCKTPIRRVIVTQRSSHFCPHCQK). The Proton donor; for delta-elimination activity role is filled by R253.

This sequence belongs to the FPG family. Monomer. Zn(2+) is required as a cofactor.

The catalysed reaction is Hydrolysis of DNA containing ring-opened 7-methylguanine residues, releasing 2,6-diamino-4-hydroxy-5-(N-methyl)formamidopyrimidine.. It carries out the reaction 2'-deoxyribonucleotide-(2'-deoxyribose 5'-phosphate)-2'-deoxyribonucleotide-DNA = a 3'-end 2'-deoxyribonucleotide-(2,3-dehydro-2,3-deoxyribose 5'-phosphate)-DNA + a 5'-end 5'-phospho-2'-deoxyribonucleoside-DNA + H(+). Involved in base excision repair of DNA damaged by oxidation or by mutagenic agents. Acts as a DNA glycosylase that recognizes and removes damaged bases. Has a preference for oxidized purines, such as 7,8-dihydro-8-oxoguanine (8-oxoG). Has AP (apurinic/apyrimidinic) lyase activity and introduces nicks in the DNA strand. Cleaves the DNA backbone by beta-delta elimination to generate a single-strand break at the site of the removed base with both 3'- and 5'-phosphates. This is Formamidopyrimidine-DNA glycosylase from Solibacter usitatus (strain Ellin6076).